The following is a 249-amino-acid chain: DNA polymerase sliding clamp (249 aa).

The protein belongs to the PCNA family. As to quaternary structure, the subunits circularize to form a toroid; DNA passes through its center. Replication factor C (RFC) is required to load the toroid on the DNA. Homotrimer. Interacts with NucS.

In terms of biological role, sliding clamp subunit that acts as a moving platform for DNA processing. Responsible for tethering the catalytic subunit of DNA polymerase and other proteins to DNA during high-speed replication. Regulates activity of NucS endonuclease and prevents non-specific cleavage. This Pyrococcus abyssi (strain GE5 / Orsay) protein is DNA polymerase sliding clamp.